The chain runs to 198 residues: Large ribosomal subunit protein bL25 (198 aa).

This sequence belongs to the bacterial ribosomal protein bL25 family. CTC subfamily. Part of the 50S ribosomal subunit; part of the 5S rRNA/L5/L18/L25 subcomplex. Contacts the 5S rRNA. Binds to the 5S rRNA independently of L5 and L18.

Its function is as follows. This is one of the proteins that binds to the 5S RNA in the ribosome where it forms part of the central protuberance. This chain is Large ribosomal subunit protein bL25, found in Bordetella avium (strain 197N).